The primary structure comprises 187 residues: Probable chorismate pyruvate-lyase (187 aa).

R76, L114, and E173 together coordinate substrate.

Belongs to the UbiC family.

The protein localises to the cytoplasm. It carries out the reaction chorismate = 4-hydroxybenzoate + pyruvate. Its pathway is cofactor biosynthesis; ubiquinone biosynthesis. Its function is as follows. Removes the pyruvyl group from chorismate, with concomitant aromatization of the ring, to provide 4-hydroxybenzoate (4HB) for the ubiquinone pathway. The chain is Probable chorismate pyruvate-lyase from Shewanella amazonensis (strain ATCC BAA-1098 / SB2B).